The chain runs to 249 residues: MLIQAVTIFPEMFDSITRYGVTGRANRQGIWQFEAVNPRKFADNRLGYIDDRPFGGGPGMIMMAPPLHAAIEHAKAQSSQAAKVIYLSPQGKPLTHQKAVELAELPHLILLCGRYEGIDERLLQSSVDEEISIGDFVVSGGELPAMMLMDAVLRLVPGVLGDMQSAEQDSFSSGILDCPHYTKPLEFQGMAVPEVLRSGNHGLIAEWRLEQSLRRTLERRPDLLEKRSLIPKESRILNKILQEQREIQS.

S-adenosyl-L-methionine-binding positions include Gly-113 and 133–138 (IGDFVV).

It belongs to the RNA methyltransferase TrmD family. As to quaternary structure, homodimer.

It localises to the cytoplasm. The enzyme catalyses guanosine(37) in tRNA + S-adenosyl-L-methionine = N(1)-methylguanosine(37) in tRNA + S-adenosyl-L-homocysteine + H(+). Its function is as follows. Specifically methylates guanosine-37 in various tRNAs. This is tRNA (guanine-N(1)-)-methyltransferase from Neisseria meningitidis serogroup C / serotype 2a (strain ATCC 700532 / DSM 15464 / FAM18).